Here is a 205-residue protein sequence, read N- to C-terminus: Methylthioribulose-1-phosphate dehydratase (205 aa).

2 residues coordinate Zn(2+): His94 and His96.

The protein belongs to the aldolase class II family. MtnB subfamily. It depends on Zn(2+) as a cofactor.

It carries out the reaction 5-(methylsulfanyl)-D-ribulose 1-phosphate = 5-methylsulfanyl-2,3-dioxopentyl phosphate + H2O. Its pathway is amino-acid biosynthesis; L-methionine biosynthesis via salvage pathway; L-methionine from S-methyl-5-thio-alpha-D-ribose 1-phosphate: step 2/6. Catalyzes the dehydration of methylthioribulose-1-phosphate (MTRu-1-P) into 2,3-diketo-5-methylthiopentyl-1-phosphate (DK-MTP-1-P). In Pectobacterium carotovorum subsp. carotovorum (strain PC1), this protein is Methylthioribulose-1-phosphate dehydratase.